The primary structure comprises 85 residues: MILALGDFLPKQEDKACERPWVQFPARPVIFFHHQGGIFLFSINQPNLSCFSKLKEVNSLYVRVATYICQKNESRFRTNRLKGDQ.

This is an uncharacterized protein from Saccharomyces cerevisiae (strain ATCC 204508 / S288c) (Baker's yeast).